The primary structure comprises 125 residues: Histone H2B (125 aa).

Positions Met1 to Lys32 are disordered. O-linked (GlcNAc) serine glycosylation occurs at Ser112. Residue Lys120 forms a Glycyl lysine isopeptide (Lys-Gly) (interchain with G-Cter in ubiquitin) linkage.

This sequence belongs to the histone H2B family. In terms of assembly, the nucleosome is a histone octamer containing two molecules each of H2A, H2B, H3 and H4 assembled in one H3-H4 heterotetramer and two H2A-H2B heterodimers. The octamer wraps approximately 147 bp of DNA. Monoubiquitination of Lys-120 gives a specific tag for epigenetic transcriptional activation and is also prerequisite for histone H3 'Lys-4' and 'Lys-79' methylation. In terms of processing, glcNAcylation at Ser-112 promotes monoubiquitination of Lys-120. It fluctuates in response to extracellular glucose, and associates with transcribed genes.

It localises to the nucleus. Its subcellular location is the chromosome. In terms of biological role, core component of nucleosome. Nucleosomes wrap and compact DNA into chromatin, limiting DNA accessibility to the cellular machineries which require DNA as a template. Histones thereby play a central role in transcription regulation, DNA repair, DNA replication and chromosomal stability. DNA accessibility is regulated via a complex set of post-translational modifications of histones, also called histone code, and nucleosome remodeling. This is Histone H2B from Acropora formosa (Staghorn coral).